Consider the following 401-residue polypeptide: Dual-specificity RNA methyltransferase RlmN (401 aa).

Residue Glu-114 is the Proton acceptor of the active site. The 246-residue stretch at 120-365 folds into the Radical SAM core domain; sequence DKGRGTLCVS…TMVRRTRGDD (246 aa). Residues Cys-127 and Cys-370 are joined by a disulfide bond. 3 residues coordinate [4Fe-4S] cluster: Cys-134, Cys-138, and Cys-141. Residues 187 to 188, Ser-219, 241 to 243, and Asn-327 contribute to the S-adenosyl-L-methionine site; these read GE and SLH. The active-site S-methylcysteine intermediate is Cys-370.

It belongs to the radical SAM superfamily. RlmN family. [4Fe-4S] cluster is required as a cofactor.

The protein localises to the cytoplasm. The catalysed reaction is adenosine(2503) in 23S rRNA + 2 reduced [2Fe-2S]-[ferredoxin] + 2 S-adenosyl-L-methionine = 2-methyladenosine(2503) in 23S rRNA + 5'-deoxyadenosine + L-methionine + 2 oxidized [2Fe-2S]-[ferredoxin] + S-adenosyl-L-homocysteine. The enzyme catalyses adenosine(37) in tRNA + 2 reduced [2Fe-2S]-[ferredoxin] + 2 S-adenosyl-L-methionine = 2-methyladenosine(37) in tRNA + 5'-deoxyadenosine + L-methionine + 2 oxidized [2Fe-2S]-[ferredoxin] + S-adenosyl-L-homocysteine. Its function is as follows. Specifically methylates position 2 of adenine 2503 in 23S rRNA and position 2 of adenine 37 in tRNAs. m2A2503 modification seems to play a crucial role in the proofreading step occurring at the peptidyl transferase center and thus would serve to optimize ribosomal fidelity. The sequence is that of Dual-specificity RNA methyltransferase RlmN from Xanthomonas campestris pv. campestris (strain B100).